A 355-amino-acid polypeptide reads, in one-letter code: MDAHLVQAKKTSTASELSDSSLTFPFIGDYLSSPSLTTSDYVSDCSNLTVEGPVPANQEFSSSDESSVYISSALRLADYAFTPDDNIRIKPDAVIVICTQCQHQIQDKFFLSIDGRNYHENCLQCSTCENPLSNKCFYKDKTFYCKGCYFRTHVTSTASSCRELGPKCASCDRTIQATDWVRRARNYVYHLACFSCNQCKRQLSTGEEYALQEGNLLCKQHFLELVEGDSGVSSQKAKTKRVRTTFAEDQLSVLQTYFNRDSNPDGADLEKIASMTGLSKRVTQVWFQNSRARQKKWHQKSEGDNGDSQRSSVGPSSPSQKSDSSSEMMYPTSVTTSVEDAIPDSIVILGSLQFD.

LIM zinc-binding domains follow at residues 96-155 (VICT…THVT) and 166-228 (PKCA…LVEG). The homeobox DNA-binding region spans 239–298 (TKRVRTTFAEDQLSVLQTYFNRDSNPDGADLEKIASMTGLSKRVTQVWFQNSRARQKKWH). Positions 291–336 (RARQKKWHQKSEGDNGDSQRSSVGPSSPSQKSDSSSEMMYPTSVTT) are disordered. Over residues 306-326 (GDSQRSSVGPSSPSQKSDSSS) the composition is skewed to low complexity.

Interacts with transcription factor sox-2. In terms of tissue distribution, expressed in the AWB sensory neurons and in one RME motor neuron (RMEV), two RMD motor neurons (RMDL and RMDR), the RID, RIV, SAA and SIA interneurons and the SMB sensory/inter/motor neurons.

The protein localises to the nucleus. In terms of biological role, transcription factor that binds to the promoter of target genes. Regulates genes involved in serotonin synthesis and release in serotonergic ADF neurons. Involved in specification of neuron cell fate, olfactory receptor expression, locomotion, and foraging behavior. Required in AWB olfactory neurons to repress AWC cell fate and promote the AWB cell fate during early development. Cooperates with additional factors to direct the differentiation of the olfactory neurons, functioning with the transcription factor sox-2 to suppress AWC terminal differentiation and promote AWB neuron differentiation. Involved in regulating terminal specification and maintenance of the SMB sensory/inter/motor neurons. Plays a role in regulation of RID motor neuron differentiation, but is dispensable for motor axon outgrowth in the dorsal nerve cord. May regulate its own expression. The protein is LIM/homeobox protein lim-4 of Caenorhabditis elegans.